The sequence spans 121 residues: Small ribosomal subunit protein uS13 (121 aa).

Residues His91–Lys121 form a disordered region. A compositionally biased stretch (basic residues) spans Ala106–Lys121.

This sequence belongs to the universal ribosomal protein uS13 family. As to quaternary structure, part of the 30S ribosomal subunit. Forms a loose heterodimer with protein S19. Forms two bridges to the 50S subunit in the 70S ribosome.

Functionally, located at the top of the head of the 30S subunit, it contacts several helices of the 16S rRNA. In the 70S ribosome it contacts the 23S rRNA (bridge B1a) and protein L5 of the 50S subunit (bridge B1b), connecting the 2 subunits; these bridges are implicated in subunit movement. Contacts the tRNAs in the A and P-sites. In Macrococcus caseolyticus (strain JCSC5402) (Macrococcoides caseolyticum), this protein is Small ribosomal subunit protein uS13.